The following is a 366-amino-acid chain: MLIWLVELANHVQFFNLFRYITFRTGAAMFTAALIVFLFGPKIIASLKVRQGKGQPIRADGPQTHFKKSGTPTMGGLMILAGIVGSSLLWADLSNVYVVATLLVTLGFGAIGFYDDYLKVTKQSDKGFSGKARLAIEFLIAGIAVFFMMEAAKISAPQGPHLATSIAFPFFKDALLNVGYFFIVFGGFVIVSAGNAVNLTDGLDGLAIVPVMIASAAFGLIAYLAGNAVFSGYLQINFVPGTGELAVILGSVIGAGLGFLWFNAPPAAIFMGDTGSLALGGLIGTVAVATKHEIVMVIIGGLFVMETLSVIIQVFWYKRTKKRVFLMAPIHHHFEKKGWTESQVVIRFWIIAVGLAMLGLATLKLR.

Helical transmembrane passes span 27–47 (AAMF…IASL), 71–91 (TPTM…LLWA), 93–113 (LSNV…AIGF), 134–154 (LAIE…AAKI), 174–194 (ALLN…VSAG), 205–225 (GLAI…AYLA), 245–265 (LAVI…FNAP), 268–288 (AIFM…TVAV), 294–314 (IVMV…IIQV), and 343–363 (QVVI…LATL).

The protein belongs to the glycosyltransferase 4 family. MraY subfamily. The cofactor is Mg(2+).

The protein resides in the cell inner membrane. The enzyme catalyses UDP-N-acetyl-alpha-D-muramoyl-L-alanyl-gamma-D-glutamyl-meso-2,6-diaminopimeloyl-D-alanyl-D-alanine + di-trans,octa-cis-undecaprenyl phosphate = di-trans,octa-cis-undecaprenyl diphospho-N-acetyl-alpha-D-muramoyl-L-alanyl-D-glutamyl-meso-2,6-diaminopimeloyl-D-alanyl-D-alanine + UMP. It functions in the pathway cell wall biogenesis; peptidoglycan biosynthesis. Functionally, catalyzes the initial step of the lipid cycle reactions in the biosynthesis of the cell wall peptidoglycan: transfers peptidoglycan precursor phospho-MurNAc-pentapeptide from UDP-MurNAc-pentapeptide onto the lipid carrier undecaprenyl phosphate, yielding undecaprenyl-pyrophosphoryl-MurNAc-pentapeptide, known as lipid I. This chain is Phospho-N-acetylmuramoyl-pentapeptide-transferase, found in Allorhizobium ampelinum (strain ATCC BAA-846 / DSM 112012 / S4) (Agrobacterium vitis (strain S4)).